A 341-amino-acid chain; its full sequence is Ferredoxin--NADP reductase (341 aa).

7 residues coordinate FAD: Glu36, Gln44, Phe49, Val89, Phe123, Asp289, and Thr329.

The protein belongs to the ferredoxin--NADP reductase type 2 family. As to quaternary structure, homodimer. The cofactor is FAD.

The enzyme catalyses 2 reduced [2Fe-2S]-[ferredoxin] + NADP(+) + H(+) = 2 oxidized [2Fe-2S]-[ferredoxin] + NADPH. This chain is Ferredoxin--NADP reductase, found in Ligilactobacillus salivarius (strain UCC118) (Lactobacillus salivarius).